A 452-amino-acid chain; its full sequence is Rhodopsin (452 aa).

The Extracellular portion of the chain corresponds to 1–33; sequence MGRDIPDNETWWYNPYMDIHPHWKQFDQVPAAV. Residue Asn8 is glycosylated (N-linked (GlcNAc...) asparagine). A helical transmembrane segment spans residues 34-58; the sequence is YYSLGIFIAICGIIGCVGNGVVIYL. Residues 59–70 are Cytoplasmic-facing; that stretch reads FTKTKSLQTPAN. Residues 71 to 97 traverse the membrane as a helical segment; sequence MFIINLAFSDFTFSLVNGFPLMTISCF. Residues 98–109 lie on the Extracellular side of the membrane; it reads MKYWVFGNAACK. A disulfide bridge connects residues Cys108 and Cys186. The chain crosses the membrane as a helical span at residues 110–131; that stretch reads VYGLIGGIFGLMSIMTMTMISI. The short motif at 132–134 is the 'Ionic lock' involved in activated form stabilization element; the sequence is DRY. Residues 132–151 lie on the Cytoplasmic side of the membrane; that stretch reads DRYNVIGRPMSASKKMSHRK. A helical membrane pass occupies residues 152–172; sequence AFIMIIFVWIWSTIWAIGPIF. Residues 173 to 199 are Extracellular-facing; the sequence is GWGAYTLEGVLCNCSFDYITRDTTTRS. Residues 200-224 traverse the membrane as a helical segment; that stretch reads NILCMYIFAFMCPIVVIFFCYFNIV. Residues 225 to 261 lie on the Cytoplasmic side of the membrane; it reads MSVSNHEKEMAAMAKRLNAKELRKAQAGANAEMKLAK. Residues 262 to 283 form a helical membrane-spanning segment; that stretch reads ISIVIVTQFLLSWSPYAVVALL. Residues 284-293 are Extracellular-facing; the sequence is AQFGPIEWVT. Residues 294 to 315 traverse the membrane as a helical segment; sequence PYAAQLPVMFAKASAIHNPMIY. Residue Lys305 is modified to N6-(retinylidene)lysine. The Cytoplasmic segment spans residues 316 to 452; the sequence is SVSHPKFRER…QGVDNQAYQA (137 aa). Residues Cys336 and Cys337 are each lipidated (S-palmitoyl cysteine). Disordered regions lie at residues 346–365 and 376–452; these read DDKDAEAEIPAGEQSGGETA and MMQK…AYQA. Residues 376 to 388 are compositionally biased toward low complexity; the sequence is MMQKMQAQQQQQP. Over residues 389 to 440 the composition is skewed to pro residues; sequence AYPPQGYPPQGYPPPPPQGYPPQGYPPQGYPPQGYPPPPQGPPPQGPPPQAA.

The protein belongs to the G-protein coupled receptor 1 family. Opsin subfamily. Contains one covalently linked retinal chromophore. Upon light absorption, the covalently bound 11-cis-retinal is converted to all-trans-retinal. After hydrolysis of the Schiff base and release of the covalently bound all-trans-retinal, active rhodopsin is regenerated by binding of a fresh molecule of 11-cis-retinal.

It localises to the cell projection. It is found in the rhabdomere membrane. In terms of biological role, photoreceptor required for image-forming vision at low light intensity. Light-induced isomerization of 11-cis to all-trans retinal triggers a conformational change that activates signaling via G-proteins. Signaling mediates the activation of phospholipase C. Subsequent receptor phosphorylation mediates displacement of the bound G-protein alpha subunit by arrestin and terminates signaling. In Loligo forbesii (Veined squid), this protein is Rhodopsin (RHO).